Consider the following 80-residue polypeptide: UPF0512 protein Q (80 aa).

It belongs to the UPF0512 family.

The sequence is that of UPF0512 protein Q from Dictyostelium discoideum (Social amoeba).